The sequence spans 228 residues: Probable 26S proteasome regulatory subunit p28 (228 aa).

6 ANK repeats span residues 1–30 (MSNY…SLLL), 35–64 (DGRI…NVNL), 71–100 (SGWT…KPDL), 106–135 (QGVT…SVRI), 139–168 (FNQI…SAVN), and 173–203 (QGWT…EYDL).

Interacts with RPT3.

Functionally, acts as a chaperone during the assembly of the 26S proteasome, specifically of the 19S regulatory complex (RC) and appears to have an overlapping role with RPN14. This is Probable 26S proteasome regulatory subunit p28 (NAS6) from Saccharomyces cerevisiae (strain ATCC 204508 / S288c) (Baker's yeast).